Consider the following 329-residue polypeptide: GTPase Obg (329 aa).

Residues 1–159 (MQFIDQARIT…WPLQLELKLL (159 aa)) enclose the Obg domain. The region spanning 160–328 (AEVGIIGLPN…LLAETWVELG (169 aa)) is the OBG-type G domain. Residues 166 to 173 (GLPNAGKS), 191 to 195 (FTTLV), 213 to 216 (DIPG), 280 to 283 (NKQE), and 309 to 311 (SAA) each bind ATP. The Mg(2+) site is built by Ser173 and Thr193.

This sequence belongs to the TRAFAC class OBG-HflX-like GTPase superfamily. OBG GTPase family. As to quaternary structure, monomer. Requires Mg(2+) as cofactor.

The protein resides in the cytoplasm. An essential GTPase which binds GTP, GDP and possibly (p)ppGpp with moderate affinity, with high nucleotide exchange rates and a fairly low GTP hydrolysis rate. Plays a role in control of the cell cycle, stress response, ribosome biogenesis and in those bacteria that undergo differentiation, in morphogenesis control. The chain is GTPase Obg from Synechococcus sp. (strain CC9605).